Reading from the N-terminus, the 140-residue chain is Ig heavy chain V region 93G7 (140 aa).

Residues 1–19 (MGWSFIFLFLLSVTAGVHS) form the signal peptide. Positions 20–139 (EVQLQQSGAE…WGQGTPLTVS (120 aa)) constitute an Ig-like domain.

The sequence is that of Ig heavy chain V region 93G7 from Mus musculus (Mouse).